Here is a 419-residue protein sequence, read N- to C-terminus: Ribosome biogenesis protein WDR12 homolog (419 aa).

Positions 10–91 (VQVHLKTKQE…EDAIEIEYVE (82 aa)) are ubiquitin-like (UBL) domain. 7 WD repeats span residues 103 to 141 (LHDD…LTIP), 142 to 184 (GHTA…NTVE), 191 to 230 (GHER…AGEG), 249 to 287 (GHRE…IKAE), 289 to 328 (STNK…GSVV), 334 to 374 (GHNA…APLY), and 378 to 416 (GHGE…VENM).

The protein belongs to the WD repeat WDR12/YTM1 family.

Its subcellular location is the nucleus. It localises to the nucleolus. The protein localises to the nucleoplasm. In terms of biological role, required for maturation of ribosomal RNAs and formation of the large ribosomal subunit. In Drosophila persimilis (Fruit fly), this protein is Ribosome biogenesis protein WDR12 homolog.